A 347-amino-acid chain; its full sequence is Haptoglobin (347 aa).

Positions 1–18 are cleaved as a signal peptide; sequence MRALGAVITLLLWGQLFA. Residues 31 to 88 enclose the Sushi domain; the sequence is DSCPKPPEIANGYVEHLVRYQCKNYYRLRTEGDGVYALNSEKQWVNKAVGEQLPECEA. 2 disulfides stabilise this stretch: cysteine 52/cysteine 86 and cysteine 90/cysteine 207. The 243-residue stretch at 103 to 345 folds into the Peptidase S1 domain; the sequence is IIGGSLDAKG…ILDWIQKTIA (243 aa). N-linked (GlcNAc...) asparagine glycosylation is found at asparagine 148, asparagine 152, asparagine 182, asparagine 230, and asparagine 256. Cystine bridges form between cysteine 250-cysteine 281 and cysteine 292-cysteine 322. The tract at residues 259–264 is interaction with CD163; that stretch reads VPENKI.

The protein belongs to the peptidase S1 family. Tetramer of two alpha and two beta chains; disulfide-linked. The hemoglobin/haptoglobin complex is composed of a haptoglobin dimer bound to two hemoglobin alpha-beta dimers. Interacts with CD163. Interacts with ERGIC3. Expressed by the liver and secreted in plasma.

The protein resides in the secreted. Functionally, as a result of hemolysis, hemoglobin is found to accumulate in the kidney and is secreted in the urine. Haptoglobin captures, and combines with free plasma hemoglobin to allow hepatic recycling of heme iron and to prevent kidney damage. Haptoglobin also acts as an antioxidant, has antibacterial activity and plays a role in modulating many aspects of the acute phase response. Hemoglobin/haptoglobin complexes are rapidly cleared by the macrophage CD163 scavenger receptor expressed on the surface of liver Kupfer cells through an endocytic lysosomal degradation pathway. In Oryctolagus cuniculus (Rabbit), this protein is Haptoglobin (HP).